The primary structure comprises 88 residues: MLDTKFDELMEFPASFPFKVVGDASDTLQDRVVAVVQGLAPGDYAPSTKASSKGTYYSVTIRVTVTSKEQIEKLYTQLAELEGVKRVL.

Belongs to the UPF0250 family.

The chain is UPF0250 protein swp_3927 from Shewanella piezotolerans (strain WP3 / JCM 13877).